The primary structure comprises 176 residues: Sigma intracellular receptor 2 (176 aa).

Residues 1-9 are Cytoplasmic-facing; that stretch reads MGAPATRRC. Residues 10-30 traverse the membrane as a helical segment; it reads VEWLLGLYFLSHIPITLFMDL. The EXPERA domain occupies 10–158; the sequence is VEWLLGLYFL…PYLLIPFILL (149 aa). At 31 to 68 the chain is on the lumenal side; it reads QAVLPRELYPVEFRNLLKWYAKEFKDPLLQEPPAWFKS. Residues 69 to 89 form a helical membrane-spanning segment; the sequence is FLFCELVFQLPFFPIATYAFL. Cholesterol contacts are provided by Val75 and Gln77. Residues 90 to 99 lie on the Cytoplasmic side of the membrane; the sequence is KGSCKWIRTP. The helical transmembrane segment at 100-120 threads the bilayer; it reads AIIYSVHTMTTLIPILSTFLF. The tract at residues 108–176 is required for interaction with Hst1/HTN1; the sequence is MTTLIPILST…YKYEEKRKKK (69 aa). Topologically, residues 121 to 140 are lumenal; sequence EDFSKASGFKGQRPETLHER. The helical transmembrane segment at 141-161 threads the bilayer; that stretch reads LTLVSVYAPYLLIPFILLIFM. Residues 162–176 lie on the Cytoplasmic side of the membrane; that stretch reads LRSPYYKYEEKRKKK. An ER retention motif motif is present at residues 172–176; that stretch reads KRKKK.

The protein belongs to the TMEM97/sigma-2 receptor family. As to quaternary structure, homodimer. Interacts with NPC1; the interaction impairs NPC1-mediated cholesterol transport. Interacts with PGRMC1 and LDLR; the interaction increases LDL internalization. Interacts with histatin 1/HTN1; the interaction induces HTN1-stimulating wound healing. Interacts with TSPO. Forms a complex with TSPO and PGRMC1; the interaction occurs in MIA PaCa-2 cells but not in MCF7 cells. In terms of tissue distribution, widely expressed in normal tissues. Expressed in pancreatic, renal, breast, colon, ovarian surface epithelial (OSE) cells. Highly expressed in various proliferating cancer cells.

The protein resides in the rough endoplasmic reticulum membrane. It localises to the nucleus membrane. Functionally, sigma-2 receptor which contributes to ameliorate dysfunctional cellular processes and slow degenerative progression by regulating cell functions including cholesterol biosynthesis/trafficking, membrane trafficking, autophagy, lipid membrane-bound protein trafficking, and receptor stabilization at the cell surface. Forms a ternary complex with PGRMC1 receptor and low density lipoprotein receptor/LDLR at the plasma membrane, which increases LDLR-mediated LDL cholesterol internalization. Decreases lysosomal sterol transporter NPC1 availability to the cell, probably through NPC1-binding, hence controlling lipid transport, including cholesterol and LBPA, outside of late endosome/lysosome. Binds regio- and stereoselective ligand 20(S)-hydroxycholesterol (20(S)-OHC) which enhances TMEM97-NPC1 interaction and decreases TMEM97-PGRMC1 and TMEM97-TSPO interactions, thereby linking OHC binding to cholesterol homeostasis. Also able to bind cholesterol. Binds histatin 1 (Hst 1)/HN1 salivary peptide at the ER membrane, which is critical for increasing mitochondria-ER contacts and stimulating Hst1 wound healing properties. May alter the activity of some cytochrome P450 proteins. Although shows homologies with sterol isomerases (EXPERA domain), not able to catalyze sterol isomerization. However, may act as sensors of these molecules. Acts as a quality control factor in the ER, promoting the proteolytic degradation of nonproductive and extramitochondrial precursor proteins in the ER membrane thus removing them from the ER surface. In Homo sapiens (Human), this protein is Sigma intracellular receptor 2.